A 347-amino-acid polypeptide reads, in one-letter code: tRNA N6-adenosine threonylcarbamoyltransferase (347 aa).

Positions 109 and 113 each coordinate Fe cation. Substrate-binding positions include 136 to 140 (TVSGG), Asp169, Gly182, Asp186, and Asn284. Fe cation is bound at residue Asp312.

Belongs to the KAE1 / TsaD family. The cofactor is Fe(2+).

The protein localises to the cytoplasm. The enzyme catalyses L-threonylcarbamoyladenylate + adenosine(37) in tRNA = N(6)-L-threonylcarbamoyladenosine(37) in tRNA + AMP + H(+). Its function is as follows. Required for the formation of a threonylcarbamoyl group on adenosine at position 37 (t(6)A37) in tRNAs that read codons beginning with adenine. Is involved in the transfer of the threonylcarbamoyl moiety of threonylcarbamoyl-AMP (TC-AMP) to the N6 group of A37, together with TsaE and TsaB. TsaD likely plays a direct catalytic role in this reaction. The sequence is that of tRNA N6-adenosine threonylcarbamoyltransferase from Chlorobium phaeobacteroides (strain BS1).